The primary structure comprises 69 residues: Large ribosomal subunit protein bL31 (69 aa).

Zn(2+) is bound by residues C16, C18, C37, and C40.

It belongs to the bacterial ribosomal protein bL31 family. Type A subfamily. As to quaternary structure, part of the 50S ribosomal subunit. Requires Zn(2+) as cofactor.

Binds the 23S rRNA. This chain is Large ribosomal subunit protein bL31, found in Buchnera aphidicola subsp. Cinara cedri (strain Cc).